The chain runs to 66 residues: Conotoxin Cal6.38 (66 aa).

Residues 1–22 (MKLTFVLIVAVLVLAVCNFTVA) form the signal peptide. 3 disulfide bridges follow: cysteine 38–cysteine 55, cysteine 45–cysteine 59, and cysteine 54–cysteine 64.

The protein belongs to the conotoxin O1 superfamily. Expressed by the venom duct.

It is found in the secreted. Its function is as follows. Probable neurotoxin. The chain is Conotoxin Cal6.38 from Californiconus californicus (California cone).